The sequence spans 540 residues: MKFWSRPLTFLIIIIYLIIQQVNSSPPSLSIPEHFLRCLDTQPSDHGSPNSRTAVIPTNSSFSTNLMNGVRNLRFASVSTRKPEVIVAAVTETHIRATISCCKLLNLELRIRSGGHDYEGFSYTSPVPFVILDMYNFNKIDINMKDETVWIQSGASLGQLYYNIASKSKVHAFPAGVCPKVGAGGHFSGGGFGNLMRKYGLSIDHIIDAQIMDANGKVYRNRQAMGEDVFWAIRGGGGGSYGVILAWKIKLVRVPEKVTVFKLERTVREGAVDLVHKWQQVAPVIDRDLFIRLEIKPINRKISKGKTIKVSFIGMFLGLPERLLNITKQSFPELHLTKEDCMVKKWIESSVFWANYPEKAPIELLLKRVSTNEYYWKRTSDFVQAPISKQGLAKIFQTMIDHSPLPRRVWMQWNPWGGKMAEIASDATAFVHRGGNVFMIEHFMNWYRPGDELEEKFLAIARSFKEAMAPFVSKNPREAFFNYRDVDIGITTPGYNATYEGAKVYGDSYFKGNYLRLVKIKARFDRTNFFRSQQGIPVLA.

The first 24 residues, 1 to 24, serve as a signal peptide directing secretion; sequence MKFWSRPLTFLIIIIYLIIQQVNS. Cys-38 and Cys-101 are oxidised to a cystine. Asn-59 carries an N-linked (GlcNAc...) asparagine glycan. An FAD-binding PCMH-type domain is found at 79–254; that stretch reads STRKPEVIVA…LAWKIKLVRV (176 aa). The 6-(S-cysteinyl)-8alpha-(pros-histidyl)-FAD (His-Cys) cross-link spans 116-178; it reads HDYEGFSYTS…KVHAFPAGVC (63 aa). Asn-325 and Asn-496 each carry an N-linked (GlcNAc...) asparagine glycan.

This sequence belongs to the oxygen-dependent FAD-linked oxidoreductase family. Requires FAD as cofactor. Post-translationally, the FAD cofactor is bound via a bicovalent 6-S-cysteinyl, 8alpha-N1-histidyl FAD linkage.

Its subcellular location is the secreted. It is found in the cell wall. The chain is Berberine bridge enzyme-like 16 from Arabidopsis thaliana (Mouse-ear cress).